Reading from the N-terminus, the 1167-residue chain is Carbamoyl phosphate synthase large chain (1167 aa).

The carboxyphosphate synthetic domain stretch occupies residues 1–455 (MPRRTDIKSI…SLQKALRGLE (455 aa)). 12 residues coordinate ATP: Arg-129, Arg-221, Gly-227, Gly-228, Glu-260, Val-262, Glu-267, Gly-293, Val-294, His-295, Gln-337, and Glu-351. The 197-residue stretch at 184–380 (LETRWNLGEG…IAKIAAKLAV (197 aa)) folds into the ATP-grasp 1 domain. 3 residues coordinate Mg(2+): Gln-337, Glu-351, and Asn-353. Mn(2+)-binding residues include Gln-337, Glu-351, and Asn-353. The interval 456 to 619 (TGLTGLDEIE…PFAGALANEA (164 aa)) is oligomerization domain. Residues 620–1031 (QVSSRKKVVI…AFAKSQLGAG (412 aa)) are carbamoyl phosphate synthetic domain. The 213-residue stretch at 748-960 (QKLLHKLGLS…IAKIAARIMA (213 aa)) folds into the ATP-grasp 2 domain. Residues Arg-784, Thr-844, Leu-846, Glu-851, Gly-876, Ile-877, His-878, Ser-879, Gln-919, and Glu-931 each contribute to the ATP site. Mg(2+) is bound by residues Gln-919, Glu-931, and Asn-933. Mn(2+)-binding residues include Gln-919, Glu-931, and Asn-933. The MGS-like domain maps to 1032 to 1167 (VDLPRSGTLF…EVRPLQEYFA (136 aa)). Residues 1032-1167 (VDLPRSGTLF…EVRPLQEYFA (136 aa)) form an allosteric domain region.

The protein belongs to the CarB family. In terms of assembly, composed of two chains; the small (or glutamine) chain promotes the hydrolysis of glutamine to ammonia, which is used by the large (or ammonia) chain to synthesize carbamoyl phosphate. Tetramer of heterodimers (alpha,beta)4. Mg(2+) is required as a cofactor. It depends on Mn(2+) as a cofactor.

The enzyme catalyses hydrogencarbonate + L-glutamine + 2 ATP + H2O = carbamoyl phosphate + L-glutamate + 2 ADP + phosphate + 2 H(+). It carries out the reaction hydrogencarbonate + NH4(+) + 2 ATP = carbamoyl phosphate + 2 ADP + phosphate + 2 H(+). Its pathway is amino-acid biosynthesis; L-arginine biosynthesis; carbamoyl phosphate from bicarbonate: step 1/1. It participates in pyrimidine metabolism; UMP biosynthesis via de novo pathway; (S)-dihydroorotate from bicarbonate: step 1/3. Large subunit of the glutamine-dependent carbamoyl phosphate synthetase (CPSase). CPSase catalyzes the formation of carbamoyl phosphate from the ammonia moiety of glutamine, carbonate, and phosphate donated by ATP, constituting the first step of 2 biosynthetic pathways, one leading to arginine and/or urea and the other to pyrimidine nucleotides. The large subunit (synthetase) binds the substrates ammonia (free or transferred from glutamine from the small subunit), hydrogencarbonate and ATP and carries out an ATP-coupled ligase reaction, activating hydrogencarbonate by forming carboxy phosphate which reacts with ammonia to form carbamoyl phosphate. The sequence is that of Carbamoyl phosphate synthase large chain from Mesorhizobium japonicum (strain LMG 29417 / CECT 9101 / MAFF 303099) (Mesorhizobium loti (strain MAFF 303099)).